Consider the following 880-residue polypeptide: Beta-glucosidase 2 (880 aa).

An N-terminal signal peptide occupies residues 1 to 17 (MLLILELLVLIIGLGVA). 3 N-linked (GlcNAc...) asparagine glycosylation sites follow: Asn-24, Asn-77, and Asn-271. Asp-299 is an active-site residue. Asn-336, Asn-343, Asn-376, Asn-548, Asn-589, Asn-712, Asn-743, and Asn-794 each carry an N-linked (GlcNAc...) asparagine glycan.

Belongs to the glycosyl hydrolase 3 family.

The enzyme catalyses Hydrolysis of terminal, non-reducing beta-D-glucosyl residues with release of beta-D-glucose.. Its pathway is glycan metabolism; cellulose degradation. This chain is Beta-glucosidase 2 (BGL2), found in Saccharomycopsis fibuligera (Yeast).